We begin with the raw amino-acid sequence, 138 residues long: Translation initiation factor 5A (138 aa).

Position 42 is a hypusine (lysine 42).

Belongs to the eIF-5A family.

It is found in the cytoplasm. Its function is as follows. Functions by promoting the formation of the first peptide bond. The sequence is that of Translation initiation factor 5A (eif5a) from Pyrobaculum aerophilum (strain ATCC 51768 / DSM 7523 / JCM 9630 / CIP 104966 / NBRC 100827 / IM2).